The chain runs to 168 residues: Pleiotrophin (168 aa).

A signal peptide spans 1–32; it reads MQTPQFLQQRRKFAAAFLAFIFLLAVVDTAEA. Cystine bridges form between Cys-47-Cys-76, Cys-55-Cys-85, Cys-62-Cys-89, Cys-99-Cys-131, and Cys-109-Cys-141. Chondroitin sulfate binding stretches follow at residues 92 to 99 and 123 to 131; these read KKQFGAEC and KRALHNADC. The disordered stretch occupies residues 139-168; the sequence is KPCGKVTKPKPQAESKKKKKEGKKQEKMLD. The interval 147 to 168 is chondroitin sulfate A binding; the sequence is PKPQAESKKKKKEGKKQEKMLD.

Belongs to the pleiotrophin family. In terms of assembly, interacts with ALK and NEK6. Interacts with PTPRZ1 (via chondroitin sulfate groups); promotes formation of homooligomers; oligomerization impairs tyrosine phosphatase activity. Forms a complex with PTPRZ1 and CTNNB1; this complex inactivates PTPRZ1 protein tyrosine phosphatase activity through PTN interaction and stimulates tyrosine phosphorylation of CTNNB1. Interacts with ITGB3 and ITGA5. Forms a complex with PTPRZ1 and integrin alpha-V/beta-3 (ITGAV:ITGB3) that stimulates endothelial cell migration through ITGB3 'Tyr-773' phosphorylation. Interacts with SDC3 (via heparan sulfate chains); this interaction mediates the neurite outgrowth-promoting signal from PTN to the cytoskeleton of growing neurites; this interaction mediates osteoblast recruitment. Interacts with GPC2 (via heparan sulfate); this interaction promotes neurite outgrowth through binding of PTN with chondroitin sulfate of proteoglycans, thereby releasing PTPRS of chondroitin sulfate proteoglycans (CSPGs) and leading to binding with heparan sulfate of GPC2. Phosphorylated by NEK6.

The protein resides in the secreted. Functionally, secreted growth factor that mediates its signal through cell-surface proteoglycan and non-proteoglycan receptors. Binds cell-surface proteoglycan receptor via their chondroitin sulfate (CS) groups. Thereby regulates many processes like cell proliferation, cell survival, cell growth, cell differentiation and cell migration in several tissues namely neuron and bone. Also plays a role in synaptic plasticity and learning-related behavior by inhibiting long-term synaptic potentiation. Binds PTPRZ1, leading to neutralization of the negative charges of the CS chains of PTPRZ1, inducing PTPRZ1 clustering, thereby causing the dimerization and inactivation of its phosphatase activity leading to increased tyrosine phosphorylation of each of the PTPRZ1 substrates like ALK, CTNNB1 or AFAP1L2 in order to activate the PI3K-AKT pathway. Through PTPRZ1 binding controls oligodendrocyte precursor cell differentiation by enhancing the phosphorylation of AFAP1L2 in order to activate the PI3K-AKT pathway. Forms a complex with PTPRZ1 and integrin alpha-V/beta-3 (ITGAV:ITGB3) that stimulates endothelial cell migration through SRC dephosphorylation and activation that consequently leads to ITGB3 'Tyr-773' phosphorylation. In adult hippocampus promotes dendritic arborization, spine development, and functional integration and connectivity of newborn granule neurons through ALK by activating AKT signaling pathway. Binds GPC2 and chondroitin sulfate proteoglycans (CSPGs) at the neuron surface, leading to abrogation of binding between PTPRS and CSPGs and neurite outgrowth promotion. Binds SDC3 and mediates bone formation by recruiting and attaching osteoblasts/osteoblast precursors to the sites for new bone deposition. Binds ALK and promotes cell survival and cell proliferation through MAPK pathway activation. Inhibits proliferation and enhances differentiation of neural stem cells by inhibiting FGF2-induced fibroblast growth factor receptor signaling pathway. Mediates regulatory mechanisms in normal hemostasis and in hematopoietic regeneration and in maintaining the balance of myeloid and lymphoid regeneration. In addition may play a role in the female reproductive system, auditory response and the progesterone-induced decidualization pathway. The sequence is that of Pleiotrophin from Sus scrofa (Pig).